The following is a 171-amino-acid chain: Protein-export protein SecB (171 aa).

It belongs to the SecB family. In terms of assembly, homotetramer, a dimer of dimers. One homotetramer interacts with 1 SecA dimer.

It is found in the cytoplasm. One of the proteins required for the normal export of preproteins out of the cell cytoplasm. It is a molecular chaperone that binds to a subset of precursor proteins, maintaining them in a translocation-competent state. It also specifically binds to its receptor SecA. This Jannaschia sp. (strain CCS1) protein is Protein-export protein SecB.